We begin with the raw amino-acid sequence, 350 residues long: Galactokinase (350 aa).

14–17 contributes to the substrate binding site; the sequence is EHTD. Residues Ser46 and 96–102 contribute to the ATP site; that span reads GAGLSSS. Mg(2+)-binding residues include Ser102 and Glu134. Asp146 (proton acceptor) is an active-site residue. Tyr196 serves as a coordination point for substrate.

The protein belongs to the GHMP kinase family. GalK subfamily.

The protein resides in the cytoplasm. The catalysed reaction is alpha-D-galactose + ATP = alpha-D-galactose 1-phosphate + ADP + H(+). It functions in the pathway carbohydrate metabolism; galactose metabolism. In terms of biological role, catalyzes the transfer of the gamma-phosphate of ATP to D-galactose to form alpha-D-galactose-1-phosphate (Gal-1-P). This Thermotoga maritima (strain ATCC 43589 / DSM 3109 / JCM 10099 / NBRC 100826 / MSB8) protein is Galactokinase.